Here is a 250-residue protein sequence, read N- to C-terminus: Putative apoptosis inhibitor ORF99 (250 aa).

The stretch at 13-78 (RVNSFGGWSK…KFSGDCLYLK (66 aa)) is one BIR repeat.

In terms of biological role, may act as an apoptosis inhibitor. The sequence is that of Putative apoptosis inhibitor ORF99 from Ostreid herpesvirus 1 (isolate France) (OsHV-1).